A 372-amino-acid polypeptide reads, in one-letter code: tRNA-specific 2-thiouridylase MnmA (372 aa).

ATP contacts are provided by residues glycine 9–serine 16 and methionine 35. Positions asparagine 95–aspartate 97 are interaction with target base in tRNA. The Nucleophile role is filled by cysteine 100. Cysteines 100 and 201 form a disulfide. An ATP-binding site is contributed by glycine 124. An interaction with tRNA region spans residues lysine 151–glutamine 153. The Cysteine persulfide intermediate role is filled by cysteine 201. An interaction with tRNA region spans residues arginine 317–tyrosine 318.

The protein belongs to the MnmA/TRMU family.

It is found in the cytoplasm. It carries out the reaction S-sulfanyl-L-cysteinyl-[protein] + uridine(34) in tRNA + AH2 + ATP = 2-thiouridine(34) in tRNA + L-cysteinyl-[protein] + A + AMP + diphosphate + H(+). Its function is as follows. Catalyzes the 2-thiolation of uridine at the wobble position (U34) of tRNA, leading to the formation of s(2)U34. This chain is tRNA-specific 2-thiouridylase MnmA, found in Herminiimonas arsenicoxydans.